The following is a 434-amino-acid chain: Galactofuranosyl glycosyltransferase (434 aa).

At 1–18 (MAPPRWHHDRRRMAIFVR) the chain is on the cytoplasmic side. A helical; Signal-anchor for type II membrane protein membrane pass occupies residues 19 to 38 (VGLYTLLFLMGYVVPLIIFY). Residues asparagine 39, asparagine 100, asparagine 162, and asparagine 388 are each glycosylated (N-linked (GlcNAc...) asparagine). The Lumenal segment spans residues 39–434 (NRSRADTFED…KLLDFPVDPS (396 aa)).

It belongs to the glycosyltransferase 2 family.

The protein localises to the endoplasmic reticulum membrane. The protein operates within glycolipid biosynthesis; glycosylphosphatidylinositol-anchor biosynthesis. Glycosyltransferase that may be responsible for the addition of galactofuranosyl residues to the nascent lipophosphoglycan (LPG) chain. It could alternatively be involved in the synthesis of the galactofuranosyl donor. This Leishmania donovani protein is Galactofuranosyl glycosyltransferase (LPG1).